Consider the following 427-residue polypeptide: ATP-dependent RNA helicase DDX39A (427 aa).

Residues 1-19 (MAEQDVENELLDYDEDEEP) are compositionally biased toward acidic residues. Residues 1–35 (MAEQDVENELLDYDEDEEPQVPQESTPAPPKKDVK) form a disordered region. Position 2 is an N-acetylalanine (A2). A Glycyl lysine isopeptide (Lys-Gly) (interchain with G-Cter in SUMO2) cross-link involves residue K31. N6-acetyllysine; alternate is present on K35. K35 is covalently cross-linked (Glycyl lysine isopeptide (Lys-Gly) (interchain with G-Cter in SUMO2); alternate). S37 bears the Phosphoserine mark. Positions 44-72 (SGFRDFLLKPELLRAIVDCGFEHPSEVQH) match the Q motif motif. The 174-residue stretch at 75–248 (IPQAILGMDV…RKFMQDPMEV (174 aa)) folds into the Helicase ATP-binding domain. An ATP-binding site is contributed by 88-95 (AKSGMGKT). Glycyl lysine isopeptide (Lys-Gly) (interchain with G-Cter in SUMO2) cross-links involve residues K154 and K162. Residue T171 is modified to Phosphothreonine. The DECD box signature appears at 195–198 (DECD). Glycyl lysine isopeptide (Lys-Gly) (interchain with G-Cter in SUMO2) cross-links involve residues K240 and K255. A Helicase C-terminal domain is found at 260–421 (GLQQYYVKLK…ELPEEIDIST (162 aa)). S426 carries the post-translational modification Phosphoserine.

It belongs to the DEAD box helicase family. DECD subfamily. Binds ALYREF/THOC4 and DDX39B/BAT1. Interacts with the apo-AREX complex component SARNP. Interacts with MX1. Interacts with MCM3AP isoform GANP. Interacts with ECD. Interacts with PHAX; this interaction stimulates PHAX RNA binding activity. SUMOylated by RANBP2; SUMOylation modification affects its ability to bind RNA.

It is found in the nucleus. Its subcellular location is the cytoplasm. The enzyme catalyses ATP + H2O = ADP + phosphate + H(+). Its function is as follows. Helicase that plays an essential role in mRNA export and is involved in multiple steps in RNA metabolism including alternative splicing. Regulates nuclear mRNA export to the cytoplasm through association with ECD. Also involved in spliceosomal uridine-rich small nuclear RNA (U snRNA) export by stimulating the RNA binding of adapter PHAX. Plays a role in the negative regulation of type I IFN production by increasing the nuclear retention of antiviral transcripts and thus reducing their protein expression. Independently of the interferon pathway, plays an antiviral role against alphaviruses by binding to a 5' conserved sequence element in the viral genomic RNA. This is ATP-dependent RNA helicase DDX39A (Ddx39a) from Rattus norvegicus (Rat).